The sequence spans 166 residues: Large ribosomal subunit protein uL10 (166 aa).

The protein belongs to the universal ribosomal protein uL10 family. As to quaternary structure, part of the ribosomal stalk of the 50S ribosomal subunit. The N-terminus interacts with L11 and the large rRNA to form the base of the stalk. The C-terminus forms an elongated spine to which L12 dimers bind in a sequential fashion forming a multimeric L10(L12)X complex.

In terms of biological role, forms part of the ribosomal stalk, playing a central role in the interaction of the ribosome with GTP-bound translation factors. In Neisseria gonorrhoeae (strain ATCC 700825 / FA 1090), this protein is Large ribosomal subunit protein uL10.